We begin with the raw amino-acid sequence, 124 residues long: Small ribosomal subunit protein bS6 (124 aa).

It belongs to the bacterial ribosomal protein bS6 family.

Functionally, binds together with bS18 to 16S ribosomal RNA. In Chromobacterium violaceum (strain ATCC 12472 / DSM 30191 / JCM 1249 / CCUG 213 / NBRC 12614 / NCIMB 9131 / NCTC 9757 / MK), this protein is Small ribosomal subunit protein bS6.